The sequence spans 565 residues: Membrane protein insertase YidC (565 aa).

The next 6 helical transmembrane spans lie at 6-26 (VLLI…WSKN), 348-368 (LMAL…SLLH), 370-390 (WGWA…PLSA), 437-457 (GGCF…WVLV), 479-499 (PYFI…KLTP), and 516-536 (PLIF…YWVI).

Belongs to the OXA1/ALB3/YidC family. Type 1 subfamily. In terms of assembly, interacts with the Sec translocase complex via SecD. Specifically interacts with transmembrane segments of nascent integral membrane proteins during membrane integration.

The protein resides in the cell inner membrane. In terms of biological role, required for the insertion and/or proper folding and/or complex formation of integral membrane proteins into the membrane. Involved in integration of membrane proteins that insert both dependently and independently of the Sec translocase complex, as well as at least some lipoproteins. Aids folding of multispanning membrane proteins. The chain is Membrane protein insertase YidC from Xylella fastidiosa (strain M23).